Consider the following 209-residue polypeptide: Ribosomal RNA large subunit methyltransferase E (209 aa).

Residues glycine 63, tryptophan 65, aspartate 83, aspartate 99, and aspartate 124 each coordinate S-adenosyl-L-methionine. Lysine 164 acts as the Proton acceptor in catalysis.

Belongs to the class I-like SAM-binding methyltransferase superfamily. RNA methyltransferase RlmE family.

It is found in the cytoplasm. The enzyme catalyses uridine(2552) in 23S rRNA + S-adenosyl-L-methionine = 2'-O-methyluridine(2552) in 23S rRNA + S-adenosyl-L-homocysteine + H(+). In terms of biological role, specifically methylates the uridine in position 2552 of 23S rRNA at the 2'-O position of the ribose in the fully assembled 50S ribosomal subunit. The chain is Ribosomal RNA large subunit methyltransferase E from Yersinia pseudotuberculosis serotype O:1b (strain IP 31758).